A 327-amino-acid chain; its full sequence is Quinone oxidoreductase (327 aa).

The protein belongs to the zinc-containing alcohol dehydrogenase family. Quinone oxidoreductase subfamily. As to quaternary structure, homodimer.

It carries out the reaction 2 a quinone + NADPH + H(+) = 2 a 1,4-benzosemiquinone + NADP(+). In Salmonella typhimurium (strain LT2 / SGSC1412 / ATCC 700720), this protein is Quinone oxidoreductase (qor).